The following is a 210-amino-acid chain: Probable GTP-binding protein EngB (210 aa).

The region spanning 25 to 199 is the EngB-type G domain; sequence CGIEVAFAGR…RQKLDSWFSE (175 aa). GTP-binding positions include 33–40, 60–64, 78–81, 145–148, and 178–180; these read GRSNAGKS, GRTQL, DLPG, TKAD, and FSS. Positions 40 and 62 each coordinate Mg(2+).

This sequence belongs to the TRAFAC class TrmE-Era-EngA-EngB-Septin-like GTPase superfamily. EngB GTPase family. Mg(2+) serves as cofactor.

Functionally, necessary for normal cell division and for the maintenance of normal septation. The polypeptide is Probable GTP-binding protein EngB (Salmonella dublin (strain CT_02021853)).